Reading from the N-terminus, the 482-residue chain is Ras GTPase-activating protein-binding protein 2 (482 aa).

The region spanning 11-133 (VGREFVRQYY…FYVHNDMFRY (123 aa)) is the NTF2 domain. Acidic residues predominate over residues 140–158 (DSEPELDEESEDEVEEEQE). 2 disordered regions span residues 140–171 (DSEP…QENA) and 187–318 (EPLE…EQND). Residues Ser-141, Ser-149, and Ser-225 each carry the phosphoserine modification. An acidic disordered region region spans residues 142–220 (EPELDEESED…PQVEEKNLEE (79 aa)). Over residues 191-225 (ESSHEPEPEPESETKTEELKPQVEEKNLEELEEKS) the composition is skewed to basic and acidic residues. Thr-227 carries the post-translational modification Phosphothreonine. At Ser-235 the chain carries Phosphoserine. Residues 247 to 264 (ASVTSKNLPPSGTVSSSG) show a composition bias toward polar residues. Lys-281 participates in a covalent cross-link: Glycyl lysine isopeptide (Lys-Gly) (interchain with G-Cter in SUMO2). A compositionally biased stretch (basic and acidic residues) spans 290-300 (RVREQRPRERP). The RRM domain maps to 331 to 409 (HQLFVGNLPH…VRLNVEEKKT (79 aa)). At Lys-392 the chain carries N6-succinyllysine. The interval 404–476 (VEEKKTRAAR…GRGTGQMEGR (73 aa)) is RG-rich region. Residues 408–432 (KTRAARERETRGGGDDRRDIRRNDR) show a composition bias toward basic and acidic residues. Residues 408–482 (KTRAARERET…MEGRFTGQRR (75 aa)) are disordered. Residues 433–445 (GPGGPRGIVGGGM) are compositionally biased toward gly residues. Arg-457 bears the Omega-N-methylarginine mark. Ser-466 carries the phosphoserine modification. Arg-468 carries the post-translational modification Omega-N-methylarginine.

Forms homooligomers. Forms heterodimers with G3BP1. Interacts with NFKBIA (via N-terminus). Interacts (via NTF2 domain) with USP10; inhibiting stress granule formation. Interacts (via NTF2 domain) with CAPRIN1; promoting stress granule formation. Associates (via RG-rich region) with 40S ribosome subunits. Interacts with PABPC1. In terms of assembly, (Microbial infection) Interacts with non-structural protein 3 (via C-terminus) of Sindbis virus and Semliki forest virus; this interaction inhibits the formation of host stress granules on viral mRNAs and the nsp3-G3BP2 complexes bind viral RNAs and probably orchestrate the assembly of viral replication complexes. (Microbial infection) Cleaved by foot-and-mouth disease virus leader protease; this cleavage suppresses the formation of cytoplasmic stress granules.

It is found in the cytoplasm. The protein resides in the stress granule. With respect to regulation, under physiological conditions, G3BP2 adopts a compact state that is stabilized by intramolecular interactions between the RG-rich and the acidic regions that inhibit phase separation. Upon stress, polysomes disassemble and mRNAs are released in an unfolded protein-free state. Binding of unfolded mRNA to G3BP2 outcompetes the intramolecular interactions and RNA-bound G3BP2 adopts an expanded conformation in which the RG-rich region becomes exposed to engage in protein-protein and protein-RNA interactions, allowing physical cross-linking of RNA molecules to form protein-RNA condensates, leading to liquid-liquid phase separation (LLPS). Scaffold protein that plays an essential role in cytoplasmic stress granule formation which acts as a platform for antiviral signaling. Plays an essential role in stress granule formation. Stress granules are membraneless compartments that store mRNAs and proteins, such as stalled translation pre-initiation complexes, in response to stress. Promotes formation of stress granules phase-separated membraneless compartment by undergoing liquid-liquid phase separation (LLPS) upon unfolded RNA-binding: functions as a molecular switch that triggers RNA-dependent LLPS in response to a rise in intracellular free RNA concentrations. The protein is Ras GTPase-activating protein-binding protein 2 of Homo sapiens (Human).